A 100-amino-acid polypeptide reads, in one-letter code: NADH-quinone oxidoreductase subunit K (100 aa).

Helical transmembrane passes span 4–24 (LSWY…GFVI), 29–49 (IVML…FASF), and 60–80 (IFVL…LAIV).

It belongs to the complex I subunit 4L family. As to quaternary structure, NDH-1 is composed of 14 different subunits. Subunits NuoA, H, J, K, L, M, N constitute the membrane sector of the complex.

It is found in the cell inner membrane. The enzyme catalyses a quinone + NADH + 5 H(+)(in) = a quinol + NAD(+) + 4 H(+)(out). Functionally, NDH-1 shuttles electrons from NADH, via FMN and iron-sulfur (Fe-S) centers, to quinones in the respiratory chain. The immediate electron acceptor for the enzyme in this species is believed to be ubiquinone. Couples the redox reaction to proton translocation (for every two electrons transferred, four hydrogen ions are translocated across the cytoplasmic membrane), and thus conserves the redox energy in a proton gradient. The chain is NADH-quinone oxidoreductase subunit K from Thermodesulfovibrio yellowstonii (strain ATCC 51303 / DSM 11347 / YP87).